The chain runs to 837 residues: Tuftelin-interacting protein 11 (837 aa).

2 stretches are compositionally biased toward basic and acidic residues: residues 1–13 and 53–64; these read MSLS…GEGR and VWAERDSDDERP. Disordered regions lie at residues 1-21, 53-72, and 85-133; these read MSLS…DDER, VWAE…KRAR, and LKKG…KGFA. Residues 1–50 form a required for interaction with DHX15 region; that stretch reads MSLSHLYRDGEGRIDDDDDERENFEITDWDLQNEFNPNRQRHWQTKEEAT. Phosphoserine occurs at positions 2, 59, and 98. A compositionally biased stretch (acidic residues) spans 91–102; the sequence is EEAELEDSDDEE. Positions 103–116 are enriched in basic and acidic residues; that stretch reads KPVKQDDFPKDFGP. Ser144 bears the Phosphoserine mark. One can recognise a G-patch domain in the interval 149-195; sequence TKGIGQKLLQKMGYVPGRGLGKNAQGIINPIEAKQRKGKGAVGAYGS. A disordered region spans residues 179-236; it reads IEAKQRKGKGAVGAYGSERTTQSMQDFPVVDSEEEAEEEFQKELSQWRKDPSGSKKKP. Ser210 carries the post-translational modification Phosphoserine. A compositionally biased stretch (basic and acidic residues) spans 217-231; that stretch reads EFQKELSQWRKDPSG. The Nuclear localization signal signature appears at 700–705; it reads VKDKFN. Residues 710–734 are required for nuclear speckle localization; it reads IMNRAVSSNVGAYMQPGARENIAYL.

It belongs to the TFP11/STIP family. As to quaternary structure, identified in the spliceosome C complex. Found in the Intron Large (IL) complex, a post-mRNA release spliceosomal complex containing the excised intron, U2, U5 and U6 snRNPs, and splicing factors. Interacts with TUFT1. Interacts with DHX15; indicative for a recruitment of DHX15 to the IL complex. Interacts with GCFC2.

It localises to the cytoplasm. It is found in the nucleus. Functionally, involved in pre-mRNA splicing, specifically in spliceosome disassembly during late-stage splicing events. Intron turnover seems to proceed through reactions in two lariat-intron associated complexes termed Intron Large (IL) and Intron Small (IS). In cooperation with DHX15 seems to mediate the transition of the U2, U5 and U6 snRNP-containing IL complex to the snRNP-free IS complex leading to efficient debranching and turnover of excised introns. May play a role in the differentiation of ameloblasts and odontoblasts or in the forming of the enamel extracellular matrix. This is Tuftelin-interacting protein 11 (TFIP11) from Homo sapiens (Human).